The sequence spans 215 residues: MVKLYSKFPDVQVLTTKGPIDFYKDIFGKGKWLFLFAHPADFTPVCTTEFVAFSQKYEEFKKLGVELVGLSVDSIYSHIQWLMDIEQRYGVKVPFPVIADPDKKLARMLDALDEASGQTIRIVVLASPDGIIRFVAQYPMEFGRNIDELLRITKAAIVNYKAKVVLPANWQPGQDVIVPPPAIFDEAEMRIKLPNAKAWYLLFKKYEELPPDQKV.

In terms of domain architecture, Thioredoxin spans 2 to 158 (VKLYSKFPDV…LLRITKAAIV (157 aa)). The Cysteine sulfenic acid (-SOH) intermediate role is filled by Cys-46. Arg-121 serves as a coordination point for substrate.

This sequence belongs to the peroxiredoxin family. Prx6 subfamily. As to quaternary structure, homodecamer. Pentamer of dimers that assemble into a ring structure.

The protein localises to the cytoplasm. It catalyses the reaction a hydroperoxide + [thioredoxin]-dithiol = an alcohol + [thioredoxin]-disulfide + H2O. Its function is as follows. Thiol-specific peroxidase that catalyzes the reduction of hydrogen peroxide and organic hydroperoxides to water and alcohols, respectively. Plays a role in cell protection against oxidative stress by detoxifying peroxides. In Sulfurisphaera tokodaii (strain DSM 16993 / JCM 10545 / NBRC 100140 / 7) (Sulfolobus tokodaii), this protein is Peroxiredoxin 1.